Reading from the N-terminus, the 237-residue chain is 1-(5-phosphoribosyl)-5-[(5-phosphoribosylamino)methylideneamino] imidazole-4-carboxamide isomerase (237 aa).

D8 functions as the Proton acceptor in the catalytic mechanism. Residue D128 is the Proton donor of the active site.

Belongs to the HisA/HisF family.

It localises to the cytoplasm. The enzyme catalyses 1-(5-phospho-beta-D-ribosyl)-5-[(5-phospho-beta-D-ribosylamino)methylideneamino]imidazole-4-carboxamide = 5-[(5-phospho-1-deoxy-D-ribulos-1-ylimino)methylamino]-1-(5-phospho-beta-D-ribosyl)imidazole-4-carboxamide. It participates in amino-acid biosynthesis; L-histidine biosynthesis; L-histidine from 5-phospho-alpha-D-ribose 1-diphosphate: step 4/9. The sequence is that of 1-(5-phosphoribosyl)-5-[(5-phosphoribosylamino)methylideneamino] imidazole-4-carboxamide isomerase from Gemmatimonas aurantiaca (strain DSM 14586 / JCM 11422 / NBRC 100505 / T-27).